The chain runs to 377 residues: Aquaporin-2 (377 aa).

Residues 1–14 lie on the Cytoplasmic side of the membrane; it reads MAANKGINGGIKNH. Residues 15-35 traverse the membrane as a helical segment; that stretch reads FIAFLGEFVGTFLFLFFAYGG. Residues 36-56 lie on the Extracellular side of the membrane; sequence TQTANQTSQKNPSIVASPDIN. Asn40 is a glycosylation site (N-linked (GlcNAc...) asparagine). The chain crosses the membrane as a helical span at residues 57-77; it reads QLLYIALIFGFSLTVNVWIFF. Residues 78-87 are Cytoplasmic-facing; that stretch reads RVSGGLFNPA. An NPA 1 motif is present at residues 85 to 87; it reads NPA. Residues 88–108 form a helical membrane-spanning segment; that stretch reads VTIALCLVGVVGPVRSIFIFI. At 109–144 the chain is on the extracellular side; it reads AQVVASIAAAAAVRGLLPGDTVLFSCALAPGTSIAQ. The helical transmembrane segment at 145 to 165 threads the bilayer; the sequence is GLFLEMFFTIELVFTILMLAA. Over 166–171 the chain is Cytoplasmic; sequence EKTKVT. The chain crosses the membrane as a helical span at residues 172-192; sequence FVAPVGIGLSLFVAELMGVAW. Over 193–215 the chain is Extracellular; it reads TGGALNPARAFGAEVIGGFRGYH. The NPA 2 signature appears at 198 to 200; sequence NPA. The helical transmembrane segment at 216-236 threads the bilayer; it reads WIYWLGPLMGAVLAAGFYKVI. Residues 237–377 are Cytoplasmic-facing; it reads KFLNYEQVNG…ANAQNRAKTP (141 aa). Disordered regions lie at residues 278-332 and 358-377; these read LFQT…RENE and RLSGERYVQDANAQNRAKTP. 2 stretches are compositionally biased toward polar residues: residues 315–328 and 368–377; these read PAQQQTWPHSASTI and ANAQNRAKTP.

Belongs to the MIP/aquaporin (TC 1.A.8) family.

It is found in the membrane. The catalysed reaction is H2O(in) = H2O(out). It catalyses the reaction glycerol(in) = glycerol(out). Its function is as follows. Water channel required to facilitate the transport of water across membranes. Involved in conidiation. This Botryotinia fuckeliana (strain B05.10) (Noble rot fungus) protein is Aquaporin-2.